Consider the following 447-residue polypeptide: Nisin biosynthesis sensor protein NisK (447 aa).

The next 2 membrane-spanning stretches (helical) occupy residues 15-35 and 147-167; these read VIEI…LTFF and TYLF…YHLI. In terms of domain architecture, Histidine kinase spans 235–447; it reads ALSHDVKTPL…GAEVILKIKK (213 aa). Residue His-238 is modified to Phosphohistidine; by autocatalysis.

Its subcellular location is the cell membrane. It catalyses the reaction ATP + protein L-histidine = ADP + protein N-phospho-L-histidine.. Member of the two-component regulatory system NisK/NisR involved in the regulation of the biosynthesis of lantibiotic nisin. NisK may function as a membrane-associated protein kinase that phosphorylates NisR in response to environmental signals. The sequence is that of Nisin biosynthesis sensor protein NisK (nisK) from Lactococcus lactis subsp. lactis (Streptococcus lactis).